We begin with the raw amino-acid sequence, 183 residues long: Ribosome-recycling factor (183 aa).

This sequence belongs to the RRF family.

It localises to the cytoplasm. Responsible for the release of ribosomes from messenger RNA at the termination of protein biosynthesis. May increase the efficiency of translation by recycling ribosomes from one round of translation to another. This chain is Ribosome-recycling factor, found in Bifidobacterium longum subsp. infantis (strain ATCC 15697 / DSM 20088 / JCM 1222 / NCTC 11817 / S12).